Consider the following 160-residue polypeptide: MITAYIALGSNLNTPVEQLHAALKAISQLSNTHLVTTSSFYKSKPLGPQDQPDYVNAVAKIETELSPLKLLDELQRIENEQGRVRLRRWGERTLDLDILLYGNEIIQNERLTIPHYDMHNREFVIVPLFEIASDLVLPNSQIITELVKQFADHKMIKLNP.

This sequence belongs to the HPPK family. As to quaternary structure, monomer.

The catalysed reaction is 6-hydroxymethyl-7,8-dihydropterin + ATP = (7,8-dihydropterin-6-yl)methyl diphosphate + AMP + H(+). It functions in the pathway cofactor biosynthesis; tetrahydrofolate biosynthesis; 2-amino-4-hydroxy-6-hydroxymethyl-7,8-dihydropteridine diphosphate from 7,8-dihydroneopterin triphosphate: step 4/4. Functionally, catalyzes the transfer of pyrophosphate from adenosine triphosphate (ATP) to 6-hydroxymethyl-7,8-dihydropterin, an enzymatic step in folate biosynthesis pathway. The chain is 2-amino-4-hydroxy-6-hydroxymethyldihydropteridine pyrophosphokinase (folK) from Haemophilus influenzae (strain ATCC 51907 / DSM 11121 / KW20 / Rd).